The primary structure comprises 512 residues: Maturase K (512 aa).

It belongs to the intron maturase 2 family. MatK subfamily.

The protein resides in the plastid. It is found in the chloroplast. In terms of biological role, usually encoded in the trnK tRNA gene intron. Probably assists in splicing its own and other chloroplast group II introns. This chain is Maturase K, found in Soldanella alpina (Alpine snowbell).